A 418-amino-acid polypeptide reads, in one-letter code: Light-independent protochlorophyllide reductase subunit N (418 aa).

Residues Cys17, Cys42, and Cys103 each coordinate [4Fe-4S] cluster.

This sequence belongs to the BchN/ChlN family. As to quaternary structure, protochlorophyllide reductase is composed of three subunits; ChlL, ChlN and ChlB. Forms a heterotetramer of two ChlB and two ChlN subunits. [4Fe-4S] cluster is required as a cofactor.

The enzyme catalyses chlorophyllide a + oxidized 2[4Fe-4S]-[ferredoxin] + 2 ADP + 2 phosphate = protochlorophyllide a + reduced 2[4Fe-4S]-[ferredoxin] + 2 ATP + 2 H2O. It participates in porphyrin-containing compound metabolism; chlorophyll biosynthesis (light-independent). In terms of biological role, component of the dark-operative protochlorophyllide reductase (DPOR) that uses Mg-ATP and reduced ferredoxin to reduce ring D of protochlorophyllide (Pchlide) to form chlorophyllide a (Chlide). This reaction is light-independent. The NB-protein (ChlN-ChlB) is the catalytic component of the complex. In Prochlorococcus marinus (strain MIT 9303), this protein is Light-independent protochlorophyllide reductase subunit N.